A 64-amino-acid chain; its full sequence is Large ribosomal subunit protein bL35 (64 aa).

Basic residues-rich tracts occupy residues 1–15 (MPKA…KRFR) and 23–33 (VRQKANRRHLL). Residues 1–47 (MPKAKTHSGASKRFRTTGSGKIVRQKANRRHLLEHKPTSRTRRLDGR) form a disordered region. A compositionally biased stretch (basic and acidic residues) spans 34–46 (EHKPTSRTRRLDG).

This sequence belongs to the bacterial ribosomal protein bL35 family.

This chain is Large ribosomal subunit protein bL35, found in Mycobacteroides abscessus (strain ATCC 19977 / DSM 44196 / CCUG 20993 / CIP 104536 / JCM 13569 / NCTC 13031 / TMC 1543 / L948) (Mycobacterium abscessus).